Consider the following 192-residue polypeptide: MSAAGASERERLVALLRERSFEQKRVVLASGRESDFFIDCKQSVLTAEGHALVGSLMFEALGALPRCEAVAGVELGGCPLASAVSLTSFLRGRPLPALYVRKEVKDHGSRRLVEGDRGLVPGMPVAILEDVITTGGSTLKAVEKLRTAGASVVGVIALVDRLEGGAEAIRAAGLPVVAICTRRDFIPDNPPG.

Residues Arg-101, Lys-102, Lys-105, His-107, and 129 to 137 (EDVITTGGS) each bind 5-phospho-alpha-D-ribose 1-diphosphate. Orotate-binding residues include Thr-133 and Arg-161.

Belongs to the purine/pyrimidine phosphoribosyltransferase family. PyrE subfamily. Homodimer. It depends on Mg(2+) as a cofactor.

The enzyme catalyses orotidine 5'-phosphate + diphosphate = orotate + 5-phospho-alpha-D-ribose 1-diphosphate. It functions in the pathway pyrimidine metabolism; UMP biosynthesis via de novo pathway; UMP from orotate: step 1/2. In terms of biological role, catalyzes the transfer of a ribosyl phosphate group from 5-phosphoribose 1-diphosphate to orotate, leading to the formation of orotidine monophosphate (OMP). This is Orotate phosphoribosyltransferase from Sorangium cellulosum (strain So ce56) (Polyangium cellulosum (strain So ce56)).